Consider the following 88-residue polypeptide: Gene 30 protein (88 aa).

This Mycobacterium (Mycobacteriophage D29) protein is Gene 30 protein (30).